The chain runs to 298 residues: Nitrogenase iron protein (298 aa).

13–20 (GKGGIGKS) contributes to the ATP binding site. Cys101 serves as a coordination point for [4Fe-4S] cluster. Position 104 is an ADP-ribosylarginine; by dinitrogenase reductase ADP-ribosyltransferase (Arg104). Cys135 is a binding site for [4Fe-4S] cluster.

This sequence belongs to the NifH/BchL/ChlL family. In terms of assembly, homodimer. The cofactor is [4Fe-4S] cluster. Post-translationally, the reversible ADP-ribosylation of Arg-104 inactivates the nitrogenase reductase and regulates nitrogenase activity.

The enzyme catalyses N2 + 8 reduced [2Fe-2S]-[ferredoxin] + 16 ATP + 16 H2O = H2 + 8 oxidized [2Fe-2S]-[ferredoxin] + 2 NH4(+) + 16 ADP + 16 phosphate + 6 H(+). Its function is as follows. The key enzymatic reactions in nitrogen fixation are catalyzed by the nitrogenase complex, which has 2 components: the iron protein and the molybdenum-iron protein. The polypeptide is Nitrogenase iron protein (Cyanothece sp. (strain PCC 7425 / ATCC 29141)).